The following is a 598-amino-acid chain: MFASRIRSRALGLHPRARFENTRLPASTTGRRYKSDETLNRVSSKITQPKSQGASQAMLYATGLTEEDMSKPQVGISSVWFEGNPCNMHLHDLSAIVRDSVHRAGLVPMRFNSVGVSDGISMGTKGMRYSLQSRELIADGIETVMNAQWYDANVSLPGCDKNMPGVLMAMGRTNRPSIMVYGGSIKPGCSAKGQKLDLVSAFQSYGQFITGQIDEKERFDIIRNACPGRGACGGMYTANTLATAIETMGMTVPGSSSCPADDPKKLVECENIGEVVKTMLREDIKPRDVLTRQAFENAMIVVNILGGSTNAVLHLIAIADSVGIKLTIDDFQAVSDKTPFLADLKPSGKYLMNDLYNIGGTPALLKYLLKEGLIDGSGITVTGKTMKENVASWPDFPADQDIIRPLSNPIKPSGHLQILRGSLAPGGSVGKITGKEGLRFEGTAKCYDYEDAFIESLERGEIKKGEKTVVIIRYEGPKGGPGMPEMLKPSAAIMGAGLGQDVALLTDGRFSGGSHGFLIGHIVPEAMEGGPIALARDGDRIVIDAEERVVDLDIPTEELEKRRKEWKAPPLRYQKGTLKKYCTLVSDASHGCVTDGPI.

The transit peptide at 1–111 (MFASRIRSRA…HRAGLVPMRF (111 aa)) directs the protein to the mitochondrion. Residues 23–50 (RLPASTTGRRYKSDETLNRVSSKITQPK) form a disordered region. Residues 40–50 (NRVSSKITQPK) show a composition bias toward polar residues. A [2Fe-2S] cluster-binding site is contributed by Cys-86. Asp-118 contributes to the Mg(2+) binding site. Cys-159 is a [2Fe-2S] cluster binding site. Asp-160 is a Mg(2+) binding site. Cys-232 is a binding site for [2Fe-2S] cluster. Residue Glu-485 participates in Mg(2+) binding. Ser-511 functions as the Proton acceptor in the catalytic mechanism.

This sequence belongs to the IlvD/Edd family. Requires [2Fe-2S] cluster as cofactor. Mg(2+) is required as a cofactor.

Its subcellular location is the mitochondrion. It catalyses the reaction (2R)-2,3-dihydroxy-3-methylbutanoate = 3-methyl-2-oxobutanoate + H2O. It carries out the reaction (2R,3R)-2,3-dihydroxy-3-methylpentanoate = (S)-3-methyl-2-oxopentanoate + H2O. The protein operates within amino-acid biosynthesis; L-isoleucine biosynthesis; L-isoleucine from 2-oxobutanoate: step 3/4. It functions in the pathway amino-acid biosynthesis; L-valine biosynthesis; L-valine from pyruvate: step 3/4. With respect to regulation, DHAD activity is not inhibited by the dihydroxyacid dehydratase inhibitor aspterric acid (AA). Its function is as follows. Dihydroxyacid dehydratase; part of the gene cluster that mediates the biosynthesis of the sesquiterpenoid aspterric acid (AA), an inhibitor of dihydroxy-acid dehydratase (DHAD) effective as an herbicide. Performs the third step in the common pathway leading to biosynthesis of branched-chain amino acids. Catalyzes the dehydration of (2R,3R)-2,3-dihydroxy-3-methylpentanoate (2,3-dihydroxy-3-methylvalerate) into 2-oxo-3-methylpentanoate (2-oxo-3-methylvalerate) and of (2R)-2,3-dihydroxy-3-methylbutanoate (2,3-dihydroxyisovalerate) into 2-oxo-3-methylbutanoate (2-oxoisovalerate), the penultimate precursor to L-isoleucine and L-valine, respectively. AstD confers self-resistance in the presence of the dihydroxyacid dehydratase inhibitor aspterric acid (AA) produced by the ast cluster. The sequence is that of Dihydroxy-acid dehydratase astD, mitochondrial from Aspergillus terreus (strain NIH 2624 / FGSC A1156).